Here is a 259-residue protein sequence, read N- to C-terminus: Proteasome subunit alpha (259 aa).

It belongs to the peptidase T1A family. As to quaternary structure, the 20S proteasome core is composed of 14 alpha and 14 beta subunits that assemble into four stacked heptameric rings, resulting in a barrel-shaped structure. The two inner rings, each composed of seven catalytic beta subunits, are sandwiched by two outer rings, each composed of seven alpha subunits. The catalytic chamber with the active sites is on the inside of the barrel. Has a gated structure, the ends of the cylinder being occluded by the N-termini of the alpha-subunits. Is capped at one or both ends by the proteasome regulatory ATPase, PAN.

The protein localises to the cytoplasm. Its activity is regulated as follows. The formation of the proteasomal ATPase PAN-20S proteasome complex, via the docking of the C-termini of PAN into the intersubunit pockets in the alpha-rings, triggers opening of the gate for substrate entry. Interconversion between the open-gate and close-gate conformations leads to a dynamic regulation of the 20S proteasome proteolysis activity. In terms of biological role, component of the proteasome core, a large protease complex with broad specificity involved in protein degradation. The polypeptide is Proteasome subunit alpha (Methanococcus maripaludis (strain DSM 14266 / JCM 13030 / NBRC 101832 / S2 / LL)).